The following is a 222-amino-acid chain: 2-C-methyl-D-erythritol 4-phosphate cytidylyltransferase (222 aa).

The protein belongs to the IspD/TarI cytidylyltransferase family. IspD subfamily.

It catalyses the reaction 2-C-methyl-D-erythritol 4-phosphate + CTP + H(+) = 4-CDP-2-C-methyl-D-erythritol + diphosphate. Its pathway is isoprenoid biosynthesis; isopentenyl diphosphate biosynthesis via DXP pathway; isopentenyl diphosphate from 1-deoxy-D-xylulose 5-phosphate: step 2/6. Functionally, catalyzes the formation of 4-diphosphocytidyl-2-C-methyl-D-erythritol from CTP and 2-C-methyl-D-erythritol 4-phosphate (MEP). This Porphyromonas gingivalis (strain ATCC BAA-308 / W83) protein is 2-C-methyl-D-erythritol 4-phosphate cytidylyltransferase.